Consider the following 197-residue polypeptide: Fucoxanthin-chlorophyll a-c binding protein F, chloroplastic (197 aa).

The transit peptide at 1–31 directs the protein to the chloroplast; the sequence is MKFAVFASLLASAAAFAPAQQSARTSVATNM. Helical transmembrane passes span 73 to 94, 114 to 134, and 174 to 196; these read ISML…PGDI, ISTA…IAVM, and GRAA…SLIP.

The protein belongs to the fucoxanthin chlorophyll protein family. In terms of assembly, the LHC complex of chromophytic algae is composed of fucoxanthin, chlorophyll A and C bound non-covalently by fucoxanthin chlorophyll proteins (FCPs). The ratio of the pigments in lhc; fucoxanthin: chlorophyll C: chlorophyll A is (0.6-1): (0.1-0.3): (1).

The protein resides in the plastid. Its subcellular location is the chloroplast thylakoid membrane. The light-harvesting complex (LHC) functions as a light receptor, it captures and delivers excitation energy to photosystems with which it is closely associated. In chromophytic algae, LHC is associated with photosystem II, energy being transferred from fucoxanthin and chlorophyll C to chlorophyll A and the photosynthetic reaction centers where it is used to synthesize ATP and reducing power. The chain is Fucoxanthin-chlorophyll a-c binding protein F, chloroplastic (FCPF) from Phaeodactylum tricornutum (Diatom).